We begin with the raw amino-acid sequence, 755 residues long: E3 ubiquitin-protein ligase TRIM56 (755 aa).

An RING-type zinc finger spans residues 21–60 (CKICLEQLRAPKTLPCLHTYCQDCLAQLADGGRVRCPECR). B box-type zinc fingers lie at residues 98 to 149 (KPAC…VVDL) and 164 to 205 (RQAA…CLPL). Residues C169, H172, C192, and H197 each coordinate Zn(2+). The stretch at 216-314 (LEGLLAGVDN…AAAFARRVLS (99 aa)) forms a coiled coil. The disordered stretch occupies residues 371–484 (EEQQPQKDGG…SPALGPNLDG (114 aa)). The segment covering 392 to 404 (SQSRREDEPKTER) has biased composition (basic and acidic residues). Phosphothreonine occurs at positions 418 and 442. Over residues 419-447 (PKEEKAQTTREEGAQTLEEDRAQTPHEDG) the composition is skewed to basic and acidic residues. A compositionally biased stretch (basic residues) spans 453–469 (RGGRPNKKKKFKGRLKS). S475 bears the Phosphoserine mark.

Belongs to the TRIM/RBCC family. Homooligomer. Interacts with STING1. Interacts with TICAM1. (Microbial infection) Preferentially ubiquitinated with 'Lys-48' and 'Lys-11'-linked ubiquitin chains by Salmonella effector SopA leading to proteasomal targeting and degradation. In terms of processing, autoubiquitinated. Widely expressed (at protein level).

The protein resides in the cytoplasm. It catalyses the reaction S-ubiquitinyl-[E2 ubiquitin-conjugating enzyme]-L-cysteine + [acceptor protein]-L-lysine = [E2 ubiquitin-conjugating enzyme]-L-cysteine + N(6)-ubiquitinyl-[acceptor protein]-L-lysine.. It participates in protein modification; protein ubiquitination. Its function is as follows. E3 ubiquitin-protein ligase that plays a key role in innate antiviral immunity by mediating ubiquitination of CGAS and STING1. In response to pathogen- and host-derived double-stranded DNA (dsDNA), targets STING1 to 'Lys-63'-linked ubiquitination, thereby promoting its homodimerization, a step required for the production of type I interferon IFN-beta. Also mediate monoubiquitination of CGAS, thereby promoting CGAS oligomerization and subsequent activation. Promotes also TNFalpha-induced NF-kappa-B signaling by mediating 'Lys-63'-linked ubiquitination TAK1, leading to enhanced interaction between TAK1 and CHUK/IKKalpha. Independently of its E3 ubiquitin ligase activity, positive regulator of TLR3 signaling. Potentiates extracellular double stranded RNA (dsRNA)-induced expression of IFNB1 and interferon-stimulated genes ISG15, IFIT1/ISG56, CXCL10, OASL and CCL5/RANTES. Promotes establishment of an antiviral state by TLR3 ligand and TLR3-mediated chemokine induction following infection by hepatitis C virus. Acts as a restriction factor of Zika virus through direct interaction with the viral RNA via its C-terminal region. In Homo sapiens (Human), this protein is E3 ubiquitin-protein ligase TRIM56.